A 226-amino-acid chain; its full sequence is 7-cyano-7-deazaguanine synthase (226 aa).

10–20 (LSGGLDSATAA) contacts ATP. Cysteine 191, cysteine 199, cysteine 202, and cysteine 205 together coordinate Zn(2+).

It belongs to the QueC family. Requires Zn(2+) as cofactor.

The catalysed reaction is 7-carboxy-7-deazaguanine + NH4(+) + ATP = 7-cyano-7-deazaguanine + ADP + phosphate + H2O + H(+). It functions in the pathway purine metabolism; 7-cyano-7-deazaguanine biosynthesis. Catalyzes the ATP-dependent conversion of 7-carboxy-7-deazaguanine (CDG) to 7-cyano-7-deazaguanine (preQ(0)). The protein is 7-cyano-7-deazaguanine synthase of Synechococcus sp. (strain CC9605).